The chain runs to 714 residues: Centromere/kinetochore protein zw10 (714 aa).

The protein belongs to the ZW10 family.

It is found in the cytoplasm. Its subcellular location is the nucleus. The protein resides in the chromosome. It localises to the centromere. The protein localises to the kinetochore. Functionally, required for accurate chromosome segregation. This is Centromere/kinetochore protein zw10 (mit(1)15) from Drosophila grimshawi (Hawaiian fruit fly).